The sequence spans 224 residues: Large ribosomal subunit protein uL1 (224 aa).

The protein belongs to the universal ribosomal protein uL1 family. Part of the 50S ribosomal subunit.

Binds directly to 23S rRNA. The L1 stalk is quite mobile in the ribosome, and is involved in E site tRNA release. Its function is as follows. Protein L1 is also a translational repressor protein, it controls the translation of the L11 operon by binding to its mRNA. This chain is Large ribosomal subunit protein uL1, found in Borrelia duttonii (strain Ly).